The primary structure comprises 1124 residues: MFYGSSSASMSLPSKNRLKRQSRTFTQVLYRTLSYRDRRSVTDLPEQVRDDPAELSTQSSAPGVLKIFGDEISAGANYKSVLATPRSSAQELIKEALERYSLNKTSACNFVLCDVIGRFEGPDRRWRTECLRALGNNEKPLLLQDLWKPKEGFSRRFELRRRAEVEELAAKEKDTVTADINAQARKLQRNRAKGTMTLQHGSSFCRSLSETSLNLVGLPGEEPKRYYSTLPGPIRTRSARDSEIRKERDGGGVKHSLYQSPHLLLLQGYNQQDCLVYLLNREQHTVGQETASARPNICLSSPDVLPLHCRIRRAAQRRSSSDQRLLLEPVAHGNVLVNFMRIERPTPIRHGDLLSFGAHYIFLYKDPLSAKPLPAQTLTRLRTLAKLCDGESGGLPEKGDACRMCGAVLHEPAASSRRSSKAPARGSQKRKLALEFERAHEDALVNRVLTLIEPSGDDHKLTPAYLLCLCIKHSANTFPPGSFGKLLQKIAKRIQTIAWEKTKELAQKQAQHQDPASLSLLSISDLVPDLQFIFFWMSNAIEILYFIQQKSPAYMQTIELMDDKAGSKESLLSATISANEEAMTILEEVIMYTFQQCVYYITKTLYVVLPGLLDCNPFGTEPSSEQCRRAAGVCVCAVCVMPEAVRRVVSVFQTTSDLLQQYQVHSEIQSQMFAYLFFFTNVSLFNQLIDKGPARGWFQRSRVLQIQASVKILLDWAKGAGHNHLAQKFFAKFCSTVTILASPPQQLSQMSWKALCAEHPSLKPVQLHRILTQYQLMAELGPLPIWQPSSEDEAYIYRTVDLLESFENHPPIVLPSAGFKVDLESDCVEDSIYRQLLYVRHFVWGLRTKTHPSNGCTDRQDAQREPPQPHSSPHPAPSVRGEGEGEVRSSSTTLGGRGEGAGAEDRTRDKPTHGIHYRNGSGARYANQSQATDSSCILTPPNTPLYPEHTYIQSNTAHYPEHASQEHTHTHSHTKTNGCMRSTPEHKKINGFISNGIEGPLSGCGFPFPVPVSHLGPKSDDICSVFVVDLDKGPYGLGMGLIDGLHTPLNSPGIYIRTLIPDGPAAADGRLCIGDRILAVNGTSLIGADYQSAVDLIRLGGGRLRFLVAKSDLEVSEKISASSC.

The region spanning 61–164 (APGVLKIFGD…RRFELRRRAE (104 aa)) is the Ras-associating domain. The tract at residues 226 to 253 (YYSTLPGPIRTRSARDSEIRKERDGGGV) is disordered. Over residues 238–252 (SARDSEIRKERDGGG) the composition is skewed to basic and acidic residues. The FHA domain occupies 284–342 (HTVGQETASARPNICLSSPDVLPLHCRIRRAAQRRSSSDQRLLLEPVAHGNVLVNFMRI). The Dilute domain occupies 516–809 (ASLSLLSISD…VDLLESFENH (294 aa)). Disordered regions lie at residues 850-942 (THPS…TPPN) and 960-982 (PEHA…CMRS). Residues 866 to 876 (PPQPHSSPHPA) are compositionally biased toward pro residues. Over residues 903-912 (AEDRTRDKPT) the composition is skewed to basic and acidic residues. Residues 926–937 (ANQSQATDSSCI) are compositionally biased toward polar residues. Residues 960–969 (PEHASQEHTH) show a composition bias toward basic and acidic residues. Residues 1027-1112 (VVDLDKGPYG…RLRFLVAKSD (86 aa)) enclose the PDZ domain.

Belongs to the RADIL family. In terms of assembly, interacts with RAP1A; in a GTP-dependent manner. As to expression, ubiquitously expressed and enriched in the anterior part of the embryos.

Its function is as follows. Downstream effector of Rap required for cell adhesion and migration of neural crest precursors during development. The sequence is that of Ras-associating and dilute domain-containing protein (radil) from Danio rerio (Zebrafish).